Here is a 114-residue protein sequence, read N- to C-terminus: Ribonuclease P protein component (114 aa).

The protein belongs to the RnpA family. Consists of a catalytic RNA component (M1 or rnpB) and a protein subunit.

The catalysed reaction is Endonucleolytic cleavage of RNA, removing 5'-extranucleotides from tRNA precursor.. Functionally, RNaseP catalyzes the removal of the 5'-leader sequence from pre-tRNA to produce the mature 5'-terminus. It can also cleave other RNA substrates such as 4.5S RNA. The protein component plays an auxiliary but essential role in vivo by binding to the 5'-leader sequence and broadening the substrate specificity of the ribozyme. This is Ribonuclease P protein component from Alkaliphilus oremlandii (strain OhILAs) (Clostridium oremlandii (strain OhILAs)).